The chain runs to 282 residues: Large ribosomal subunit protein uL2 (282 aa).

The interval 215–282 (RHKGIRPTVR…IIRSRKETKK (68 aa)) is disordered. The segment covering 263-282 (RNPKKPSTKLIIRSRKETKK) has biased composition (basic residues).

The protein belongs to the universal ribosomal protein uL2 family. Part of the 50S ribosomal subunit. Forms a bridge to the 30S subunit in the 70S ribosome.

One of the primary rRNA binding proteins. Required for association of the 30S and 50S subunits to form the 70S ribosome, for tRNA binding and peptide bond formation. It has been suggested to have peptidyltransferase activity; this is somewhat controversial. Makes several contacts with the 16S rRNA in the 70S ribosome. The protein is Large ribosomal subunit protein uL2 of Mesomycoplasma hyopneumoniae (strain J / ATCC 25934 / NCTC 10110) (Mycoplasma hyopneumoniae).